The sequence spans 433 residues: tRNA-2-methylthio-N(6)-dimethylallyladenosine synthase (433 aa).

Residues 4-119 (KKLFIQTLGC…ITQAIKTPKF (116 aa)) enclose the MTTase N-terminal domain. [4Fe-4S] cluster is bound by residues Cys-13, Cys-50, Cys-82, Cys-151, Cys-155, and Cys-158. Residues 137 to 370 (RNSIYKSYIN…QNRHSEILDE (234 aa)) enclose the Radical SAM core domain. The 61-residue stretch at 373–433 (KKQENKTFKV…KRMVLYGEII (61 aa)) folds into the TRAM domain.

This sequence belongs to the methylthiotransferase family. MiaB subfamily. As to quaternary structure, monomer. [4Fe-4S] cluster serves as cofactor.

It is found in the cytoplasm. The enzyme catalyses N(6)-dimethylallyladenosine(37) in tRNA + (sulfur carrier)-SH + AH2 + 2 S-adenosyl-L-methionine = 2-methylsulfanyl-N(6)-dimethylallyladenosine(37) in tRNA + (sulfur carrier)-H + 5'-deoxyadenosine + L-methionine + A + S-adenosyl-L-homocysteine + 2 H(+). Catalyzes the methylthiolation of N6-(dimethylallyl)adenosine (i(6)A), leading to the formation of 2-methylthio-N6-(dimethylallyl)adenosine (ms(2)i(6)A) at position 37 in tRNAs that read codons beginning with uridine. The protein is tRNA-2-methylthio-N(6)-dimethylallyladenosine synthase of Campylobacter jejuni subsp. doylei (strain ATCC BAA-1458 / RM4099 / 269.97).